Here is an 831-residue protein sequence, read N- to C-terminus: V-type proton ATPase 116 kDa subunit a1 (831 aa).

Topologically, residues 1 to 388 are cytoplasmic; that stretch reads MGELFRSEEM…DAYGIGSYRE (388 aa). A helical membrane pass occupies residues 389 to 407; it reads INPAPYTIITFPFLFAVMF. Over 408 to 409 the chain is Vacuolar; it reads GD. The chain crosses the membrane as a helical span at residues 410–426; it reads FGHGILMTLFAVWMVVR. Over 427 to 441 the chain is Cytoplasmic; the sequence is ESRILSQKIDNELFS. The helical transmembrane segment at 442 to 471 threads the bilayer; it reads MMFSGRYIILLMGLFSTYTGLIYNDCFSKA. Over 472–534 the chain is Vacuolar; that stretch reads LNLFGSSWSV…ATNKLTFLNS (63 aa). The helical transmembrane segment at 535-554 threads the bilayer; that stretch reads FKMKMSVILGIIHMIFGVAL. Residues 555-572 lie on the Cytoplasmic side of the membrane; sequence SVLNHIYFKKPLNIYLSF. Residues 573 to 593 traverse the membrane as a helical segment; it reads IPEMIFMTTLFGYLVILIIYK. Over 594 to 638 the chain is Vacuolar; the sequence is WCAYDVSTSMVAPSLLIHFINMFLFSYQDTSLPMLYKGQMGLQCF. Residues 639-658 form a helical membrane-spanning segment; sequence LVVCAIICVPWMLVLKPLIL. Over 659 to 718 the chain is Cytoplasmic; sequence RRQYLRRKHLGTHNFGGIRVGNGPTEEDAEIIQHDQLSMHSDEEEEFDFGDTVVHQAIHT. Residues 719 to 743 form a helical membrane-spanning segment; the sequence is IEYCLGCISNTASYLRLWALSLAHA. Topologically, residues 744–764 are vacuolar; sequence QLSEVLWTMVMHIGLNIRSLG. A helical membrane pass occupies residues 765–803; sequence GGIALVFIFSAFATLTIAILLIMEGLSAFLHALRLHWVE. At 804 to 831 the chain is on the cytoplasmic side; that stretch reads FRNKFYMGTGFKFLPFSFETIWEGKFDD.

Belongs to the V-ATPase 116 kDa subunit family. In terms of assembly, V-ATPase is a heteromultimeric enzyme made up of two complexes: the ATP-hydrolytic V1 complex and the proton translocation V0 complex. The V1 complex consists of three catalytic AB heterodimers that form a heterohexamer, three peripheral stalks each consisting of EG heterodimers, one central rotor including subunits D and F, and the regulatory subunits C and H. The proton translocation complex V0 consists of the proton transport subunit a, a ring of proteolipid subunits c9c'', rotary subunit d, subunits e and f, and two accessory subunits.

It localises to the cytoplasmic vesicle. Its subcellular location is the clathrin-coated vesicle membrane. The protein localises to the secretory vesicle. It is found in the synaptic vesicle membrane. The protein resides in the melanosome. Its function is as follows. Subunit of the V0 complex of vacuolar(H+)-ATPase (V-ATPase), a multisubunit enzyme composed of a peripheral complex (V1) that hydrolyzes ATP and a membrane integral complex (V0) that translocates protons. V-ATPase is responsible for acidifying and maintaining the pH of intracellular compartments and in some cell types, is targeted to the plasma membrane, where it is responsible for acidifying the extracellular environment. Required for assembly and activity of the vacuolar ATPase. The sequence is that of V-type proton ATPase 116 kDa subunit a1 (atp6v0a1) from Xenopus laevis (African clawed frog).